Consider the following 125-residue polypeptide: RutC family protein STK_08110 (125 aa).

Belongs to the RutC family.

The protein is RutC family protein STK_08110 of Sulfurisphaera tokodaii (strain DSM 16993 / JCM 10545 / NBRC 100140 / 7) (Sulfolobus tokodaii).